The sequence spans 23 residues: Aurein-4.4 (23 aa).

It belongs to the frog skin active peptide (FSAP) family. Aurein subfamily. As to expression, expressed by the skin dorsal glands.

It localises to the secreted. In terms of biological role, has no antimicrobial or anticancer activity. The sequence is that of Aurein-4.4 from Ranoidea aurea (Green and golden bell frog).